The following is a 153-amino-acid chain: MKTFVLHIFIFAFVAFASASRDSAKKIGSQYDNYETCLTEHGLTDDDIFSIGEVSSGQHKTNHEDTELHKNGCVMQCMLEKDGLMSGADYDEEKMREDYIKETGAQPGDQRIEALNTCMQETKDMEDKCDKSLILVACVLAAEAVLADSSEGA.

The N-terminal stretch at 1–19 (MKTFVLHIFIFAFVAFASA) is a signal peptide. Cystine bridges form between Cys37-Cys77, Cys73-Cys129, and Cys118-Cys138.

This sequence belongs to the PBP/GOBP family. In terms of assembly, homodimer.

It localises to the secreted. Functionally, colony queen number, a major feature of social organization, is associated with worker genotype for Gp-9. Colonies are headed by either a single reproductive queen (monogyne form) or multiple queens (polygyne form). Differences in worker Gp-9 genotypes between social forms may cause differences in workers' abilities to recognize queens and regulate their numbers. The sequence is that of Pheromone-binding protein Gp-9 from Solenopsis amblychila (Desert fire ant).